Here is a 494-residue protein sequence, read N- to C-terminus: 4-trimethylaminobutyraldehyde dehydrogenase (494 aa).

Ser-2 carries the post-translational modification N-acetylserine. Lys-30 carries the N6-acetyllysine; alternate modification. N6-succinyllysine; alternate is present on Lys-30. Lys-59 is modified (N6-succinyllysine). NAD(+) contacts are provided by residues Lys-180 and 232–236 (GSVPT). Glu-254 functions as the Proton acceptor in the catalytic mechanism. Cys-288 functions as the Nucleophile in the catalytic mechanism. N6-acetyllysine is present on Lys-298. Residue Glu-391 coordinates NAD(+).

It belongs to the aldehyde dehydrogenase family. Homotetramer. In terms of tissue distribution, detected in lever (at protein level).

It localises to the cytoplasm. Its subcellular location is the cytosol. It catalyses the reaction 4-(trimethylamino)butanal + NAD(+) + H2O = 4-(trimethylamino)butanoate + NADH + 2 H(+). It carries out the reaction an aldehyde + NAD(+) + H2O = a carboxylate + NADH + 2 H(+). The enzyme catalyses 4-aminobutanal + NAD(+) + H2O = 4-aminobutanoate + NADH + 2 H(+). The catalysed reaction is formaldehyde + NAD(+) + H2O = formate + NADH + 2 H(+). It catalyses the reaction acetaldehyde + NAD(+) + H2O = acetate + NADH + 2 H(+). It carries out the reaction imidazole-4-acetaldehyde + NAD(+) + H2O = imidazole-4-acetate + NADH + 2 H(+). The enzyme catalyses acrolein + NAD(+) + H2O = acrylate + NADH + 2 H(+). The catalysed reaction is (5-hydroxyindol-3-yl)acetaldehyde + NAD(+) + H2O = (5-hydroxyindol-3-yl)acetate + NADH + 2 H(+). It catalyses the reaction 3,4-dihydroxyphenylacetaldehyde + NAD(+) + H2O = 3,4-dihydroxyphenylacetate + NADH + 2 H(+). It carries out the reaction spermine monoaldehyde + NAD(+) + H2O = N-(2-carboxyethyl)spermidine + NADH + 2 H(+). The enzyme catalyses propanal + NAD(+) + H2O = propanoate + NADH + 2 H(+). The catalysed reaction is butanal + NAD(+) + H2O = butanoate + NADH + 2 H(+). It catalyses the reaction pentanal + NAD(+) + H2O = pentanoate + NADH + 2 H(+). It carries out the reaction hexanal + NAD(+) + H2O = hexanoate + NADH + 2 H(+). It participates in amine and polyamine biosynthesis; carnitine biosynthesis. Its function is as follows. Converts gamma-trimethylaminobutyraldehyde into gamma-butyrobetaine with high efficiency (in vitro). Can catalyze the irreversible oxidation of a broad range of aldehydes to the corresponding acids in an NAD-dependent reaction, but with low efficiency. Catalyzes the oxidation of aldehydes arising from biogenic amines and polyamines. This is 4-trimethylaminobutyraldehyde dehydrogenase (Aldh9a1) from Rattus norvegicus (Rat).